A 673-amino-acid polypeptide reads, in one-letter code: uncharacterized protein (673 aa).

Over 1 to 208 (MSTHSNDYFS…STGQLELPPD (208 aa)) the chain is Cytoplasmic. Residues serine 57, serine 112, and serine 172 each carry the phosphoserine modification. The helical transmembrane segment at 209 to 229 (GGYGWVVTFCVFLTMFSTWGC) threads the bilayer. The N-linked (GlcNAc...) asparagine glycan is linked to asparagine 230. Residues 230–255 (NASFGVDLAYYLNHDTYPGASKYDYA) are Lumenal-facing. The chain crosses the membrane as a helical span at residues 256–276 (LIAGLTVFLGQLLSPLVMALM). Residue arginine 277 is a topological domain, cytoplasmic. The chain crosses the membrane as a helical span at residues 278–298 (IIGLRTTMLFGDAVMLAAYLL). The Lumenal segment spans residues 299–315 (ASFTTKLWQLYVTQGFM). The helical transmembrane segment at 316–336 (VGCSISLIFVPATTVLPGWFL) threads the bilayer. At 337–339 (KKR) the chain is on the cytoplasmic side. Residues 340 to 360 (AVAMGVSLLGTGAGGVVYGLA) traverse the membrane as a helical segment. Topologically, residues 361 to 372 (TNKMLSDFGNTR) are lumenal. A helical transmembrane segment spans residues 373 to 393 (WCLRIIGISCSISVLVAIALL). Residues 394 to 426 (KERNPTPAIGLKSPRAMFEQLKAMFSLKVITKP) lie on the Cytoplasmic side of the membrane. Residues 427-447 (FVVLIALWFMFALFAYNMMVF) traverse the membrane as a helical segment. The Lumenal portion of the chain corresponds to 448–504 (TLSSYAISKGLSSHDASTLTAILNGSQSIGRPLMGLAGDKFGRANVTIVLTTLLTIY). Asparagine 471 and asparagine 492 each carry an N-linked (GlcNAc...) asparagine glycan. Residues 505–525 (MFAFWIPAHTFVQLIFFSILV) traverse the membrane as a helical segment. The Cytoplasmic portion of the chain corresponds to 526 to 549 (GSCVGVANVMNTVLIADMVKPEEF). Residues 550-570 (LPAWAFVNYCGAPFLLVCEVI) traverse the membrane as a helical segment. At 571 to 584 (AQALTVEKDKSNPY) the chain is on the lumenal side. A helical membrane pass occupies residues 585 to 605 (LHAQIFCGCCFIAALILISIL). Residues 606 to 673 (REYSIRMKLT…FLRMVYPMKV (68 aa)) lie on the Cytoplasmic side of the membrane. A Phosphoserine modification is found at serine 637.

Belongs to the major facilitator superfamily. Monocarboxylate porter (TC 2.A.1.13) family.

The protein localises to the endoplasmic reticulum membrane. This is an uncharacterized protein from Saccharomyces cerevisiae (strain ATCC 204508 / S288c) (Baker's yeast).